Consider the following 92-residue polypeptide: YcgL domain-containing protein Sputcn32_1766 (92 aa).

Residues 1–85 enclose the YcgL domain; the sequence is MLCTVYKSTR…PQVNLLAEHK (85 aa).

This Shewanella putrefaciens (strain CN-32 / ATCC BAA-453) protein is YcgL domain-containing protein Sputcn32_1766.